Reading from the N-terminus, the 139-residue chain is Transcription antitermination protein NusB (139 aa).

This sequence belongs to the NusB family.

Functionally, involved in transcription antitermination. Required for transcription of ribosomal RNA (rRNA) genes. Binds specifically to the boxA antiterminator sequence of the ribosomal RNA (rrn) operons. The protein is Transcription antitermination protein NusB of Erwinia tasmaniensis (strain DSM 17950 / CFBP 7177 / CIP 109463 / NCPPB 4357 / Et1/99).